A 435-amino-acid chain; its full sequence is Serine--tRNA ligase (435 aa).

Position 242–244 (242–244 (TAE)) interacts with L-serine. An ATP-binding site is contributed by 273-275 (RSE). E296 is an L-serine binding site. 360-363 (EISS) contacts ATP. S396 is an L-serine binding site.

This sequence belongs to the class-II aminoacyl-tRNA synthetase family. Type-1 seryl-tRNA synthetase subfamily. In terms of assembly, homodimer. The tRNA molecule binds across the dimer.

It localises to the cytoplasm. The catalysed reaction is tRNA(Ser) + L-serine + ATP = L-seryl-tRNA(Ser) + AMP + diphosphate + H(+). It carries out the reaction tRNA(Sec) + L-serine + ATP = L-seryl-tRNA(Sec) + AMP + diphosphate + H(+). It functions in the pathway aminoacyl-tRNA biosynthesis; selenocysteinyl-tRNA(Sec) biosynthesis; L-seryl-tRNA(Sec) from L-serine and tRNA(Sec): step 1/1. Functionally, catalyzes the attachment of serine to tRNA(Ser). Is also able to aminoacylate tRNA(Sec) with serine, to form the misacylated tRNA L-seryl-tRNA(Sec), which will be further converted into selenocysteinyl-tRNA(Sec). The sequence is that of Serine--tRNA ligase from Vibrio vulnificus (strain CMCP6).